Here is a 563-residue protein sequence, read N- to C-terminus: MESCLSVSSAPPPKKNIQEPVRPNANFHKSVWGDHFLKYASNPEQINDGVDKQHKQLKEELRKKLVVNVNIERAEEQLKLIDAIQRLGVAYHFRTEIASVLNNQLELWNNKVDDDDLYLTSLRFRLLRQQGYNVSCAVFEKFKNIDGRFNECLTDDVRGLLSLYESTHMRVHKEDILEEALEFTVAQLEQVIKSSLSDKVLLSQVVHALNIPIRKSLTRLEARYFISVYEQDKSCNETLLKFSKLDFNILQKLHQQEVADLTLWWKNLNVSEKVPYARDRLVECYFWALAEYFEPQYSRARKMSGKITALISLIDDTYDSYGTFEELALFTDAAQRWDINAIDQLPEYMRPIFRELIYLYNAMEEELLNDGISYRVEYAKQSVIQMITAYNDEAIWYHNNYVPTFEEYLKVALVSSGYRMLPTNSFVGMGKTEVPHQAFDWVSNNPLMVKASTIIARLDNDKVGHEHEQDRGHVASGVECYMKQHGATKEEAVVEFNKRISSAWKDINQECLHPLPVPMHLLERVLNLVRFVTLFYKNGDMYTNSNTHMKEFISSLLVESIPS.

The interval 1–22 is disordered; that stretch reads MESCLSVSSAPPPKKNIQEPVR. The Mg(2+) site is built by Asp-315, Asp-319, and Glu-468. The short motif at 315 to 319 is the DDXXD motif element; the sequence is DDTYD.

Belongs to the terpene synthase family. It depends on Mg(2+) as a cofactor. Predominantly expressed in root.

The catalysed reaction is (2E,6E)-farnesyl diphosphate = germacrene C + diphosphate. It carries out the reaction (2E,6E)-farnesyl diphosphate = (-)-germacrene D + diphosphate. In terms of biological role, mediates formation of germacrene C and germacrene D using farnesyl diphosphate as substrate. Can also catalyze formation of trace of germacrene B. This is Germacrene C/D synthase (TPS1) from Valeriana officinalis (Valerian).